The primary structure comprises 422 residues: Proline--tRNA ligase (422 aa).

Belongs to the class-II aminoacyl-tRNA synthetase family. ProS type 2 subfamily. In terms of assembly, homodimer.

It localises to the cytoplasm. It catalyses the reaction tRNA(Pro) + L-proline + ATP = L-prolyl-tRNA(Pro) + AMP + diphosphate. Its function is as follows. Catalyzes the attachment of proline to tRNA(Pro) in a two-step reaction: proline is first activated by ATP to form Pro-AMP and then transferred to the acceptor end of tRNA(Pro). This Wolbachia pipientis wMel protein is Proline--tRNA ligase.